Consider the following 383-residue polypeptide: Succinyl-diaminopimelate desuccinylase (383 aa).

His-69 contacts Zn(2+). Asp-71 is a catalytic residue. Asp-103 serves as a coordination point for Zn(2+). Glu-137 acts as the Proton acceptor in catalysis. Glu-138, Glu-166, and His-357 together coordinate Zn(2+).

It belongs to the peptidase M20A family. DapE subfamily. As to quaternary structure, homodimer. Requires Zn(2+) as cofactor. Co(2+) is required as a cofactor.

The catalysed reaction is N-succinyl-(2S,6S)-2,6-diaminopimelate + H2O = (2S,6S)-2,6-diaminopimelate + succinate. The protein operates within amino-acid biosynthesis; L-lysine biosynthesis via DAP pathway; LL-2,6-diaminopimelate from (S)-tetrahydrodipicolinate (succinylase route): step 3/3. Functionally, catalyzes the hydrolysis of N-succinyl-L,L-diaminopimelic acid (SDAP), forming succinate and LL-2,6-diaminopimelate (DAP), an intermediate involved in the bacterial biosynthesis of lysine and meso-diaminopimelic acid, an essential component of bacterial cell walls. The chain is Succinyl-diaminopimelate desuccinylase from Rickettsia typhi (strain ATCC VR-144 / Wilmington).